We begin with the raw amino-acid sequence, 78 residues long: Large ribosomal subunit protein bL31 (78 aa).

Positions 16, 18, 38, and 41 each coordinate Zn(2+).

Belongs to the bacterial ribosomal protein bL31 family. Type A subfamily. In terms of assembly, part of the 50S ribosomal subunit. It depends on Zn(2+) as a cofactor.

Functionally, binds the 23S rRNA. The polypeptide is Large ribosomal subunit protein bL31 (Frankia alni (strain DSM 45986 / CECT 9034 / ACN14a)).